The primary structure comprises 156 residues: 6,7-dimethyl-8-ribityllumazine synthase (156 aa).

5-amino-6-(D-ribitylamino)uracil-binding positions include phenylalanine 23, 57–59, and 81–83; these read AYE and AVI. 86-87 lines the (2S)-2-hydroxy-3-oxobutyl phosphate pocket; sequence ST. The active-site Proton donor is the histidine 89. Phenylalanine 114 lines the 5-amino-6-(D-ribitylamino)uracil pocket. Arginine 128 is a (2S)-2-hydroxy-3-oxobutyl phosphate binding site.

The protein belongs to the DMRL synthase family.

The enzyme catalyses (2S)-2-hydroxy-3-oxobutyl phosphate + 5-amino-6-(D-ribitylamino)uracil = 6,7-dimethyl-8-(1-D-ribityl)lumazine + phosphate + 2 H2O + H(+). It participates in cofactor biosynthesis; riboflavin biosynthesis; riboflavin from 2-hydroxy-3-oxobutyl phosphate and 5-amino-6-(D-ribitylamino)uracil: step 1/2. In terms of biological role, catalyzes the formation of 6,7-dimethyl-8-ribityllumazine by condensation of 5-amino-6-(D-ribitylamino)uracil with 3,4-dihydroxy-2-butanone 4-phosphate. This is the penultimate step in the biosynthesis of riboflavin. The protein is 6,7-dimethyl-8-ribityllumazine synthase of Helicobacter hepaticus (strain ATCC 51449 / 3B1).